Reading from the N-terminus, the 522-residue chain is Terpineol synthase, chloroplastic (522 aa).

Arginine 242, aspartate 279, aspartate 283, arginine 414, and asparagine 417 together coordinate (2E)-geranyl diphosphate. Mg(2+) is bound by residues aspartate 279 and aspartate 283. Positions 279 to 283 match the DDXXD motif motif; it reads DDVYD. Residues asparagine 417, threonine 421, and glutamate 425 each coordinate Mg(2+).

This sequence belongs to the terpene synthase family. Tpsb subfamily. Monomer. Mg(2+) is required as a cofactor. Mn(2+) serves as cofactor. In terms of tissue distribution, confined to flowers.

It localises to the plastid. The protein resides in the chloroplast. It carries out the reaction (2E)-geranyl diphosphate + H2O = (S)-alpha-terpineol + diphosphate. The catalysed reaction is (2E)-geranyl diphosphate = sabinene + diphosphate. The enzyme catalyses (2E)-geranyl diphosphate = beta-myrcene + diphosphate. It catalyses the reaction (2E)-geranyl diphosphate = limonene + diphosphate. It carries out the reaction (2E)-geranyl diphosphate + H2O = 1,8-cineole + diphosphate. The catalysed reaction is (2E)-geranyl diphosphate = alpha-pinene + diphosphate. The protein operates within secondary metabolite biosynthesis; terpenoid biosynthesis. Its function is as follows. Monoterpene synthase (TPS) involved in the biosynthesis of monoterpene natural products of the 'cineole cassette', volatile compounds present in floral scent. Catalyzes the conversion of (2E)-geranyl diphosphate (GPP) into alpha-terpineol and, as minor products, sabinene, beta-myrcene, limonene, alpha-pinene and 1,8-cineole. This Nicotiana langsdorffii (Langsdorff's tobacco) protein is Terpineol synthase, chloroplastic.